The chain runs to 205 residues: Small ribosomal subunit protein uS4 (205 aa).

The disordered stretch occupies residues 18 to 46; the sequence is NIWGRPKSPVNRREYGPGQHGQRRKGKLS. In terms of domain architecture, S4 RNA-binding spans 94-157; the sequence is RRLDTVVYRA…KQLAFVLEAS (64 aa).

Belongs to the universal ribosomal protein uS4 family. In terms of assembly, part of the 30S ribosomal subunit. Contacts protein S5. The interaction surface between S4 and S5 is involved in control of translational fidelity.

Its function is as follows. One of the primary rRNA binding proteins, it binds directly to 16S rRNA where it nucleates assembly of the body of the 30S subunit. Functionally, with S5 and S12 plays an important role in translational accuracy. The protein is Small ribosomal subunit protein uS4 of Rhodopseudomonas palustris (strain HaA2).